Consider the following 177-residue polypeptide: Probable DNA-directed RNA polymerase subunit delta (177 aa).

In terms of domain architecture, HTH HARE-type spans 14–83 (LSMIEVARAI…GENKWGLRSW (70 aa)). Composition is skewed to acidic residues over residues 117-134 (GDDD…DEDN) and 142-157 (EYDD…EVES). The interval 117–164 (GDDDAIDYGHDDPEDEDNYPGSVSSEYDDENPDDEKDEVESYDQKSTK) is disordered.

The protein belongs to the RpoE family. As to quaternary structure, RNAP is composed of a core of 2 alpha, a beta and a beta' subunits. The core is associated with a delta subunit and one of several sigma factors.

Participates in both the initiation and recycling phases of transcription. In the presence of the delta subunit, RNAP displays an increased specificity of transcription, a decreased affinity for nucleic acids, and an increased efficiency of RNA synthesis because of enhanced recycling. The protein is Probable DNA-directed RNA polymerase subunit delta of Streptococcus suis (strain 98HAH33).